The sequence spans 266 residues: 4-hydroxy-tetrahydrodipicolinate reductase (266 aa).

10 to 15 (GPRGRM) contacts NAD(+). Residue Lys-38 coordinates NADP(+). NAD(+) contacts are provided by residues 99–101 (GTT) and 125–128 (APNF). The active-site Proton donor/acceptor is His-155. Residue His-156 participates in (S)-2,3,4,5-tetrahydrodipicolinate binding. Lys-159 acts as the Proton donor in catalysis. Position 165–166 (165–166 (GT)) interacts with (S)-2,3,4,5-tetrahydrodipicolinate.

The protein belongs to the DapB family.

It localises to the cytoplasm. It catalyses the reaction (S)-2,3,4,5-tetrahydrodipicolinate + NAD(+) + H2O = (2S,4S)-4-hydroxy-2,3,4,5-tetrahydrodipicolinate + NADH + H(+). The catalysed reaction is (S)-2,3,4,5-tetrahydrodipicolinate + NADP(+) + H2O = (2S,4S)-4-hydroxy-2,3,4,5-tetrahydrodipicolinate + NADPH + H(+). It functions in the pathway amino-acid biosynthesis; L-lysine biosynthesis via DAP pathway; (S)-tetrahydrodipicolinate from L-aspartate: step 4/4. Catalyzes the conversion of 4-hydroxy-tetrahydrodipicolinate (HTPA) to tetrahydrodipicolinate. The chain is 4-hydroxy-tetrahydrodipicolinate reductase from Bacillus cereus (strain ATCC 10987 / NRS 248).